The chain runs to 146 residues: ATP synthase epsilon chain (146 aa).

A compositionally biased stretch (basic and acidic residues) spans 92 to 116 (ISVDQARRDRDSLRKKLNEHERSEQ). Residues 92 to 120 (ISVDQARRDRDSLRKKLNEHERSEQDPEV) are disordered.

It belongs to the ATPase epsilon chain family. As to quaternary structure, F-type ATPases have 2 components, CF(1) - the catalytic core - and CF(0) - the membrane proton channel. CF(1) has five subunits: alpha(3), beta(3), gamma(1), delta(1), epsilon(1). CF(0) has three main subunits: a, b and c.

The protein localises to the cell membrane. Produces ATP from ADP in the presence of a proton gradient across the membrane. The sequence is that of ATP synthase epsilon chain from Cutibacterium acnes (strain DSM 16379 / KPA171202) (Propionibacterium acnes).